The following is a 41-amino-acid chain: U-theraphotoxin-Lk1a (41 aa).

3 cysteine pairs are disulfide-bonded: C1–C16, C8–C21, and C15–C36.

This sequence belongs to the neurotoxin 14 (magi-1) family. 08 (Ltx-4) subfamily. In terms of tissue distribution, expressed by the venom gland.

Its subcellular location is the secreted. Functionally, toxin that causes irreversible contractile paralysis in adult Aedes aegypti resulting in 100% mortality after 24 hours. The polypeptide is U-theraphotoxin-Lk1a (Lasiodora klugi (Bahia scarlet tarantula)).